Here is a 260-residue protein sequence, read N- to C-terminus: Cytochrome c1-2, heme protein, mitochondrial (260 aa).

A mitochondrion-targeting transit peptide spans 1–17; the sequence is IGAGVSGLLGFATVASA. At 18 to 221 the chain is on the mitochondrial intermembrane side; it reads DEAEHGLECP…AAEPEMEERK (204 aa). The Cytochrome c domain occupies 43 to 150; that stretch reads ASIRRGHQVY…NGQNYVFALL (108 aa). 4 residues coordinate heme c: cysteine 56, cysteine 59, histidine 60, and methionine 179. A helical membrane pass occupies residues 222 to 241; the sequence is LMGFKWIFVLSLALLQAAYY. Over 242-260 the chain is Mitochondrial matrix; the sequence is RRLRWSVLKSRKLVLDVVN.

The protein belongs to the cytochrome c family. Component of the ubiquinol-cytochrome c oxidoreductase (cytochrome b-c1 complex, complex III, CIII), a multisubunit enzyme composed of 3 respiratory subunits cytochrome b, cytochrome c1 and Rieske protein, 2 core protein subunits, and additional low-molecular weight protein subunits. The complex exists as an obligatory dimer and forms supercomplexes (SCs) in the inner mitochondrial membrane with cytochrome c oxidase (complex IV, CIV). It depends on heme c as a cofactor. In terms of tissue distribution, in all tissues analyzed.

Its subcellular location is the mitochondrion inner membrane. It catalyses the reaction a quinol + 2 Fe(III)-[cytochrome c](out) = a quinone + 2 Fe(II)-[cytochrome c](out) + 2 H(+)(out). Functionally, component of the ubiquinol-cytochrome c oxidoreductase, a multisubunit transmembrane complex that is part of the mitochondrial electron transport chain which drives oxidative phosphorylation. The respiratory chain contains 3 multisubunit complexes succinate dehydrogenase (complex II, CII), ubiquinol-cytochrome c oxidoreductase (cytochrome b-c1 complex, complex III, CIII) and cytochrome c oxidase (complex IV, CIV), that cooperate to transfer electrons derived from NADH and succinate to molecular oxygen, creating an electrochemical gradient over the inner membrane that drives transmembrane transport and the ATP synthase. The cytochrome b-c1 complex catalyzes electron transfer from ubiquinol to cytochrome c, linking this redox reaction to translocation of protons across the mitochondrial inner membrane, with protons being carried across the membrane as hydrogens on the quinol. In the process called Q cycle, 2 protons are consumed from the matrix, 4 protons are released into the intermembrane space and 2 electrons are passed to cytochrome c. Cytochrome c1 is a catalytic core subunit containing a c-type heme. It transfers electrons from the [2Fe-2S] iron-sulfur cluster of the Rieske protein to cytochrome c. The protein is Cytochrome c1-2, heme protein, mitochondrial (CYCL) of Solanum tuberosum (Potato).